Reading from the N-terminus, the 150-residue chain is Nucleoside diphosphate kinase (150 aa).

ATP-binding residues include K9, F57, R85, T91, R102, and N112. H115 (pros-phosphohistidine intermediate) is an active-site residue.

The protein belongs to the NDK family. Homotetramer. It depends on Mg(2+) as a cofactor.

Its subcellular location is the cytoplasm. The enzyme catalyses a 2'-deoxyribonucleoside 5'-diphosphate + ATP = a 2'-deoxyribonucleoside 5'-triphosphate + ADP. The catalysed reaction is a ribonucleoside 5'-diphosphate + ATP = a ribonucleoside 5'-triphosphate + ADP. Functionally, major role in the synthesis of nucleoside triphosphates other than ATP. The ATP gamma phosphate is transferred to the NDP beta phosphate via a ping-pong mechanism, using a phosphorylated active-site intermediate. The sequence is that of Nucleoside diphosphate kinase from Symbiobacterium thermophilum (strain DSM 24528 / JCM 14929 / IAM 14863 / T).